A 305-amino-acid polypeptide reads, in one-letter code: Serine/threonine-protein phosphatase PP1-delta (305 aa).

Mn(2+)-binding residues include Asp-62, His-64, Asp-90, and Asn-122. The active-site Proton donor is His-123. Residues His-172 and His-247 each contribute to the Mn(2+) site.

This sequence belongs to the PPP phosphatase family. Expressed in male germline including spermatocytes, spermatids and spermatozoa.

The protein localises to the chromosome. It is found in the cell projection. It localises to the pseudopodium. The protein resides in the cytoplasm. It catalyses the reaction O-phospho-L-seryl-[protein] + H2O = L-seryl-[protein] + phosphate. It carries out the reaction O-phospho-L-threonyl-[protein] + H2O = L-threonyl-[protein] + phosphate. Its function is as follows. Probable phosphatase which plays a redundant role with gsp-4 in spermatogenesis by regulating sister chromatid segregation during meiosis. In addition, involved in sperm motility by controlling the dynamic disassembly of major sperm proteins (MSP) in the spermatozoan pseudopodium. This chain is Serine/threonine-protein phosphatase PP1-delta, found in Caenorhabditis elegans.